A 463-amino-acid chain; its full sequence is A-type ATP synthase subunit B (463 aa).

Belongs to the ATPase alpha/beta chains family. In terms of assembly, has multiple subunits with at least A(3), B(3), C, D, E, F, H, I and proteolipid K(x).

The protein localises to the cell membrane. Functionally, component of the A-type ATP synthase that produces ATP from ADP in the presence of a proton gradient across the membrane. The B chain is a regulatory subunit. In Thermococcus sp. (strain KI), this protein is A-type ATP synthase subunit B.